Here is a 601-residue protein sequence, read N- to C-terminus: MTTQVPPSSLLPLSPEQLARLQAAVGEFSPTQMAWLSGYFWGMVNQQPGAVVAPAVAAPAAVTITLISASQTGNARRLAEQLRDDLVAAKLNVNLVNAGDYKFKQIAQERLLVIVASTQGEGEPAEEAVALYKFLFSKKAPKLPETAFAVLGLGDTSYEHFCQAGKDFDNKLAELGAQRLLERVDADVEYQESAQQWRQQIVAALQARVPAQSAAAVAVTPSGAVDEITSSPYSKAAPLTAQLSVQQKVTGRNSEKDVRHIEIDLGDSGLRYQPGDALGIWFDNDPALVEELLALLWLKGDEQVSIDGQNISLSQALRSHLELTQNTTLIVDKYAALSRDEKLIALLADKSALQHYAKNTPIVDMVRQAPSDLNADQLVALLRPLTPRLYSIASSQAETENEVHVTVGVVRYDIDGRPRTGGASGYLADRLEVDGDIRIFIEHNDNFRLPANPETPVIMIGPGTGIAPFRAFMQQREADGATGKNWLLFGNPHFTEDFLYQVEWQRYVKDGLLTRIDLAWSRDQADKIYVQDKLREQGAELWNWIQQGAHIYVCGDANRMAKDVEQVLLDVVALHGAMDAEQADEYLSELRLARRYQRDVY.

Residues 64–202 (ITLISASQTG…SAQQWRQQIV (139 aa)) form the Flavodoxin-like domain. FMN-binding positions include 70–75 (SQTGNA), 117–120 (STQG), and 153–162 (LGDTSYEHFC). The FAD-binding FR-type domain occupies 236 to 450 (AAPLTAQLSV…IEHNDNFRLP (215 aa)). FAD-binding positions include Thr324, Lys358, 388–391 (RLYS), 406–408 (TVG), Tyr412, and 421–424 (GGAS). Residues 521–522 (SR), 527–531 (KIYVQ), and Asp563 contribute to the NADP(+) site. Position 601 (Tyr601) interacts with FAD.

Belongs to the NADPH-dependent sulphite reductase flavoprotein subunit CysJ family. The protein in the N-terminal section; belongs to the flavodoxin family. It in the C-terminal section; belongs to the flavoprotein pyridine nucleotide cytochrome reductase family. As to quaternary structure, alpha(8)-beta(8). The alpha component is a flavoprotein, the beta component is a hemoprotein. The cofactor is FAD. Requires FMN as cofactor.

The enzyme catalyses hydrogen sulfide + 3 NADP(+) + 3 H2O = sulfite + 3 NADPH + 4 H(+). The protein operates within sulfur metabolism; hydrogen sulfide biosynthesis; hydrogen sulfide from sulfite (NADPH route): step 1/1. In terms of biological role, component of the sulfite reductase complex that catalyzes the 6-electron reduction of sulfite to sulfide. This is one of several activities required for the biosynthesis of L-cysteine from sulfate. The flavoprotein component catalyzes the electron flow from NADPH -&gt; FAD -&gt; FMN to the hemoprotein component. The sequence is that of Sulfite reductase [NADPH] flavoprotein alpha-component from Yersinia enterocolitica serotype O:8 / biotype 1B (strain NCTC 13174 / 8081).